Reading from the N-terminus, the 172-residue chain is Adenine phosphoribosyltransferase (172 aa).

Belongs to the purine/pyrimidine phosphoribosyltransferase family. As to quaternary structure, homodimer.

The protein localises to the cytoplasm. The enzyme catalyses AMP + diphosphate = 5-phospho-alpha-D-ribose 1-diphosphate + adenine. It participates in purine metabolism; AMP biosynthesis via salvage pathway; AMP from adenine: step 1/1. In terms of biological role, catalyzes a salvage reaction resulting in the formation of AMP, that is energically less costly than de novo synthesis. The polypeptide is Adenine phosphoribosyltransferase (Staphylococcus saprophyticus subsp. saprophyticus (strain ATCC 15305 / DSM 20229 / NCIMB 8711 / NCTC 7292 / S-41)).